Consider the following 45-residue polypeptide: Photosystem II reaction center protein K (45 aa).

The propeptide occupies 1–8 (MNSALFLA). The helical transmembrane segment at 23–43 (ILPVIPVFFLLLAFVWQAAIG) threads the bilayer.

This sequence belongs to the PsbK family. In terms of assembly, PSII is composed of 1 copy each of membrane proteins PsbA, PsbB, PsbC, PsbD, PsbE, PsbF, PsbH, PsbI, PsbJ, PsbK, PsbL, PsbM, PsbT, PsbX, PsbY, PsbZ, Psb30/Ycf12, at least 3 peripheral proteins of the oxygen-evolving complex and a large number of cofactors. It forms dimeric complexes.

The protein localises to the plastid. Its subcellular location is the chloroplast thylakoid membrane. One of the components of the core complex of photosystem II (PSII). PSII is a light-driven water:plastoquinone oxidoreductase that uses light energy to abstract electrons from H(2)O, generating O(2) and a proton gradient subsequently used for ATP formation. It consists of a core antenna complex that captures photons, and an electron transfer chain that converts photonic excitation into a charge separation. This Porphyra purpurea (Red seaweed) protein is Photosystem II reaction center protein K.